The chain runs to 136 residues: Non-structural protein 1 (136 aa).

It belongs to the pneumovirus non-structural protein 1 family. As to quaternary structure, monomer. Homomultimer. Heteromultimer with NS2. Interacts with the matrix protein M. Interacts with host ELOC and CUL2; this interaction allows NS1 to form an active E3 ligase with ELOC and CUL2. Interacts with host IRF3; this interaction leads to the disrupted association of IRF3 with CREBBP and thus reduced binding of IRF3 to the IFN-beta promoter. Interacts with host MAVS; this interaction prevents MAVS binding to RIGI and inhibits signaling pathway leading to interferon production. Interacts with host TRIM25 (via SPRY domain); this interaction suppresses RIGI ubiquitination and results in decreased interaction between RIGI and MAVS.

It localises to the host cytoplasm. The protein localises to the host mitochondrion. Its subcellular location is the host nucleus. Plays a major role in antagonizing the type I IFN-mediated antiviral response by degrading or inhibiting multiple cellular factors required for either IFN induction or response pathways. Acts cooperatively with NS2 to repress activation and nuclear translocation of host IFN-regulatory factor IRF3. Also disrupts the association of IRF3 with CREBBP. Interacts with host mitochondrial-associated membrane (MAM) MAVS and prevents the interaction with RIGI. Interacts with TRIM25 to suppress TRIM25-mediated RIGI ubiquitination and thereby RIGI-MAVS interaction. Together with NS2, participates in the proteasomal degradation of host STAT2, IRF3, IRF7, TBK1 and RIGI through a NS-degradasome involving CUL2 and Elongin-C. The degradasome requires an intact mitochondrial MAVS. Decreases the levels of host TRAF3 and IKBKE/IKK-epsilon. As functions other than disruptions of the type I IFN-mediated antiviral signaling pathways, induces host SOCS1 and SOCS3 expression. Suppresses premature apoptosis by an NF-kappa-B-dependent, interferon-independent mechanism and thus facilitates virus growth. Additionally, NS1 may serve some inhibitory role in viral transcription and RNA replication. Suppresses proliferation and activation of host CD103+ CD8+ cytotoxic T-lymphocytes and Th17 helper T-lymphocytes. This chain is Non-structural protein 1 (1C), found in Ovis aries (Sheep).